Consider the following 699-residue polypeptide: SPX domain-containing membrane protein At4g22990 (699 aa).

In terms of domain architecture, SPX spans 2–145 (VAFGKKLKER…GYRFTNYYVK (144 aa)). Helical transmembrane passes span 249 to 269 (FMSL…TYII), 280 to 300 (LGAA…AQLF), 317 to 337 (LIFS…AFDF), 339 to 358 (SIAV…ARAV), 377 to 397 (AGFV…AGLL), and 413 to 433 (LPGW…AISF). Residues 475–490 (IEEQGEDECDGSEEAS) are compositionally biased toward acidic residues. The segment at 475–494 (IEEQGEDECDGSEEASEDSR) is disordered. The next 5 helical transmembrane spans lie at 515-535 (LLIY…SSVI), 546-566 (SVAI…LVVG), 578-598 (ILLV…HVVV), 606-626 (VCSG…NLSL), and 671-691 (MLLN…IVAT).

This sequence belongs to the major facilitator superfamily.

It is found in the membrane. This is SPX domain-containing membrane protein At4g22990 from Arabidopsis thaliana (Mouse-ear cress).